Consider the following 345-residue polypeptide: L-threonine 3-dehydrogenase (345 aa).

Zn(2+) is bound at residue C39. Catalysis depends on charge relay system residues T41 and H44. H64, E65, C94, C97, C100, and C108 together coordinate Zn(2+). Residues I176, D196, R201, 263 to 265 (LGI), and 287 to 288 (VY) each bind NAD(+).

It belongs to the zinc-containing alcohol dehydrogenase family. In terms of assembly, homotetramer. Requires Zn(2+) as cofactor.

It is found in the cytoplasm. The enzyme catalyses L-threonine + NAD(+) = (2S)-2-amino-3-oxobutanoate + NADH + H(+). It participates in amino-acid degradation; L-threonine degradation via oxydo-reductase pathway; glycine from L-threonine: step 1/2. In terms of biological role, catalyzes the NAD(+)-dependent oxidation of L-threonine to 2-amino-3-ketobutyrate. This is L-threonine 3-dehydrogenase from Anaeromyxobacter dehalogenans (strain 2CP-C).